The chain runs to 494 residues: Lysine--tRNA ligase (494 aa).

Mg(2+)-binding residues include E399 and E406.

This sequence belongs to the class-II aminoacyl-tRNA synthetase family. Requires Mg(2+) as cofactor.

It is found in the cytoplasm. The enzyme catalyses tRNA(Lys) + L-lysine + ATP = L-lysyl-tRNA(Lys) + AMP + diphosphate. The sequence is that of Lysine--tRNA ligase (lysS) from Saccharolobus solfataricus (strain ATCC 35092 / DSM 1617 / JCM 11322 / P2) (Sulfolobus solfataricus).